Consider the following 162-residue polypeptide: Caveolin-2 (162 aa).

At 1–86 the chain is on the cytoplasmic side; it reads MGLETEKADV…FEISKYVIYK (86 aa). Tyr19 is subject to Phosphotyrosine; by SRC. Residues Ser20 and Ser23 each carry the phosphoserine modification. Phosphotyrosine; by SRC is present on Tyr27. At Ser36 the chain carries Phosphoserine. Residues 87–107 constitute an intramembrane region (helical); the sequence is FLTVFLAIPLAFTAGILFATL. The Cytoplasmic segment spans residues 108–162; sequence SCLHIWIIMPFVKTCLMVLPSVQTIWRSVTDVIIAPLCTSIGRICSSVSLQVSHD.

It belongs to the caveolin family. In terms of assembly, monomer or homodimer. Interacts with CAV1; the interaction forms a stable heterooligomeric complex that is required for targeting to lipid rafts and for caveolae formation. Tyrosine phosphorylated forms do not form heterooligomers with the Tyr-19-phosphorylated form existing as a monomer or dimer, and the Tyr-27-form as a monomer only. Interacts (tyrosine phosphorylated form) with the SH2 domain-containing proteins, RASA1, NCK1 and SRC. Interacts (tyrosine phosphorylated form) with INSR, the interaction (Tyr-27-phosphorylated form) is increased on insulin stimulation. Interacts (Tyr-19 phosphorylated form) with MAPK1 (phosphorylated form); the interaction, promoted by insulin, leads to nuclear location and MAPK1 activation. Interacts with STAT3; the interaction is increased on insulin-induced tyrosine phosphorylation leading to STAT activation. Phosphorylated on serine and tyrosine residues. CAV1 promotes phosphorylation on Ser-23 which then targets the complex to the plasma membrane, lipid rafts and caveolae. Phosphorylation on Ser-36 appears to modulate mitosis in endothelial cells. Phosphorylation on both Tyr-19 and Tyr-27 is required for insulin-induced 'Ser-727' phosphorylation of STAT3 and its activation. Phosphorylation on Tyr-19 is required for insulin-induced phosphorylation of MAPK1 and DNA binding of STAT3. Tyrosine phosphorylation is induced by both EGF and insulin (By. similarity).

It is found in the nucleus. It localises to the cytoplasm. The protein localises to the golgi apparatus membrane. Its subcellular location is the cell membrane. The protein resides in the membrane. It is found in the caveola. Functionally, may act as a scaffolding protein within caveolar membranes. Interacts directly with G-protein alpha subunits and can functionally regulate their activity. Acts as an accessory protein in conjunction with CAV1 in targeting to lipid rafts and driving caveolae formation. The Ser-36 phosphorylated form has a role in modulating mitosis in endothelial cells. Positive regulator of cellular mitogenesis of the MAPK signaling pathway. Required for the insulin-stimulated nuclear translocation and activation of MAPK1 and STAT3, and the subsequent regulation of cell cycle progression. This is Caveolin-2 (CAV2) from Atelerix albiventris (Middle-African hedgehog).